Consider the following 413-residue polypeptide: Histidine--tRNA ligase (413 aa).

Belongs to the class-II aminoacyl-tRNA synthetase family.

It localises to the cytoplasm. The catalysed reaction is tRNA(His) + L-histidine + ATP = L-histidyl-tRNA(His) + AMP + diphosphate + H(+). The chain is Histidine--tRNA ligase from Methanosarcina acetivorans (strain ATCC 35395 / DSM 2834 / JCM 12185 / C2A).